Reading from the N-terminus, the 446-residue chain is C4-dicarboxylate transport protein (446 aa).

9 helical membrane passes run 20–40 (HLYVQVLAAIAIGILLGHFYP), 56–76 (LVKMVIAPVIFLTVVTGIAGM), 91–111 (IYFLTFSTLALIIGLIIANVV), 160–180 (GDILQVLFFSVLFGIALAGVG), 200–220 (LVHILMKAAPIGAFGAMAFTI), 233–253 (FLILTFYITSFLFVVVVLGLV), 319–339 (IYMTLAALFIAQATDIHLSLG), 344–364 (LLLVAMLSSKGAAGITGAGFI), and 367–387 (AATLSVVPTVPLAGMALILGI).

The protein belongs to the dicarboxylate/amino acid:cation symporter (DAACS) (TC 2.A.23) family.

It is found in the cell inner membrane. In terms of biological role, responsible for the transport of dicarboxylates such as succinate, fumarate, and malate from the periplasm across the membrane. In Azorhizobium caulinodans (strain ATCC 43989 / DSM 5975 / JCM 20966 / LMG 6465 / NBRC 14845 / NCIMB 13405 / ORS 571), this protein is C4-dicarboxylate transport protein.